The primary structure comprises 104 residues: Chitin-binding protein 2 (104 aa).

As to quaternary structure, oligomer in an unreduced state. In terms of processing, glycosylated.

In terms of biological role, chitin-binding protein. Has antifungal activity against C.krusei, C.albicans, C.tropicalis and C.parapsilosis. Inhibits C.albicans by increasing cell membrane permeability and production of reactive oxygen species. Has no hemagglutinating activity. The chain is Chitin-binding protein 2 from Moringa oleifera (Horseradish tree).